The chain runs to 299 residues: Putative zinc-binding protein ORF12 (299 aa).

The protein is Putative zinc-binding protein ORF12 (ORF12) of Ictaluridae (bullhead catfishes).